The following is a 588-amino-acid chain: Phomenoic acid biosynthesis cluster cytochrome P450 monooxygenase (588 aa).

The N-terminal stretch at 1–21 (MSFARIFITILLLFILRRAFK) is a signal peptide. A glycan (N-linked (GlcNAc...) asparagine) is linked at Asn293. Over residues 467–486 (HQSDPDRFKPSPDAPDEKLF) the composition is skewed to basic and acidic residues. Residues 467–490 (HQSDPDRFKPSPDAPDEKLFRPSR) form a disordered region. Heme is bound at residue Cys519.

Belongs to the cytochrome P450 family. Requires heme as cofactor.

The protein operates within secondary metabolite biosynthesis. Cytochrome P450 monooxygenase; part of the gene cluster that mediates the biosynthesis of phomenoic acid, a long chain aliphatic carboxylic acid that does not appear to be essential for pathogenicity but may play a role in allowing to outcompete other fungi in the environmental niche via its antifungal properties. The polyketide synthase produces the long methylated aliphatic carboxylic acid chain of phomenoic acid. The cluster-specific cytochrome P450 monooxygenase may then hydroxylate the methyl group of carbon 31. The putative dehydrogenase YogA, which has no obvious role in phomenoic acid biosynthesis, may further modify phomenoic acid to produce a compound not identified yet. This chain is Phomenoic acid biosynthesis cluster cytochrome P450 monooxygenase, found in Leptosphaeria maculans (strain JN3 / isolate v23.1.3 / race Av1-4-5-6-7-8) (Blackleg fungus).